Consider the following 688-residue polypeptide: Zinc finger and BTB domain-containing protein 48 (688 aa).

Residues 26-89 (CDATLDVGGL…FYTGHLALTS (64 aa)) form the BTB domain. Residues 119–140 (SVGQAAGGQSGLGPPASQNVNS) form a disordered region. Lys-143 participates in a covalent cross-link: Glycyl lysine isopeptide (Lys-Gly) (interchain with G-Cter in SUMO2). A disordered region spans residues 161 to 192 (PRDQEPRGSHSPQRPQLHSPAQSEGPSSLCGK). 3 positions are modified to phosphoserine: Ser-169, Ser-171, and Ser-179. Positions 170-186 (HSPQRPQLHSPAQSEGP) are enriched in polar residues. Residue Lys-263 forms a Glycyl lysine isopeptide (Lys-Gly) (interchain with G-Cter in SUMO2) linkage. The C2H2-type 1 zinc finger occupies 291–313 (VECPTCHKKFLSKYYLKVHNRKH). Residues Cys-293, Cys-296, His-309, His-313, Cys-321, Cys-324, His-337, Cys-342, Cys-352, Cys-355, His-368, His-372, Cys-380, Cys-383, His-396, and His-401 each coordinate Zn(2+). The CCHC-type zinc finger occupies 319 to 344 (FECPKCGKCYFRKENLLEHEARNCMN). C2H2-type zinc fingers lie at residues 350–372 (FTCS…MVSH), 378–401 (YKCS…IKLH), 407–430 (HACP…AFKH), 436–459 (FVCE…KAKH), 465–487 (HVCE…LRTH), 493–515 (FQCH…NRTH), 521–544 (FSCE…ASRH), 550–572 (HFCQ…VRRH), and 578–600 (FECT…MEIH). Positions 552, 555, 568, 580, 583, 596, and 600 each coordinate Zn(2+).

It belongs to the krueppel C2H2-type zinc-finger protein family. Interacts with EP300. As to expression, detected in adrenal gland and neuroblastoma.

It is found in the nucleus. The protein resides in the chromosome. Its subcellular location is the telomere. Its function is as follows. Plays a critical role in transcriptional regulation and chromatin remodeling. Acts as a regulator of telomere length. Directly binds the telomeric double-stranded 5'-TTAGGG-3' repeat. Preferentially binds to telomeres that have a low concentration of shelterin complex and acts as a regulator of telomere length by initiating telomere trimming, a process that prevents the accumulation of aberrantly long telomeres. Also acts as a transcription regulator that binds to promoter regions. Regulates expression of a small subset of genes, including MTFP1. Acts as a negative regulator of cell proliferation by specifically activating expression of ARF, a tumor suppressor isoform of CDKN2A. Acts as a transcription regulator of CIITA, the major factor regulating MHC class II gene expression. In addition, regulates cellular m6A/m6Am methylation on RNA by facilitating the recruitment of the RNA demethylase, FTO, to target mRNAs. This is Zinc finger and BTB domain-containing protein 48 from Homo sapiens (Human).